The sequence spans 681 residues: DNA ligase (681 aa).

Residues 35–39, 84–85, and Glu115 contribute to the NAD(+) site; these read DAEYD and SL. The active-site N6-AMP-lysine intermediate is the Lys117. NAD(+) is bound by residues Arg138, Glu175, Lys293, and Lys317. Zn(2+)-binding residues include Cys411, Cys414, Cys429, and Cys435. Residues 598–681 enclose the BRCT domain; that stretch reads RTNLAVPGKT…SLLRDTSSSE (84 aa).

Belongs to the NAD-dependent DNA ligase family. LigA subfamily. It depends on Mg(2+) as a cofactor. The cofactor is Mn(2+).

The enzyme catalyses NAD(+) + (deoxyribonucleotide)n-3'-hydroxyl + 5'-phospho-(deoxyribonucleotide)m = (deoxyribonucleotide)n+m + AMP + beta-nicotinamide D-nucleotide.. Functionally, DNA ligase that catalyzes the formation of phosphodiester linkages between 5'-phosphoryl and 3'-hydroxyl groups in double-stranded DNA using NAD as a coenzyme and as the energy source for the reaction. It is essential for DNA replication and repair of damaged DNA. The sequence is that of DNA ligase from Nitrosomonas europaea (strain ATCC 19718 / CIP 103999 / KCTC 2705 / NBRC 14298).